The chain runs to 329 residues: Ketol-acid reductoisomerase (NADP(+)) (329 aa).

In terms of domain architecture, KARI N-terminal Rossmann spans 2–182 (TQLFYDTDAD…GGTRAGILET (181 aa)). Residues 25–28 (YGSQ), S51, S53, and 83–86 (DEFQ) each bind NADP(+). H108 is an active-site residue. NADP(+) is bound at residue G134. One can recognise a KARI C-terminal knotted domain in the interval 183–328 (NFKEETETDL…KSLRSMFSWL (146 aa)). Mg(2+)-binding residues include D191, E195, E227, and E231. Residue S252 participates in substrate binding.

The protein belongs to the ketol-acid reductoisomerase family. Mg(2+) serves as cofactor.

The catalysed reaction is (2R)-2,3-dihydroxy-3-methylbutanoate + NADP(+) = (2S)-2-acetolactate + NADPH + H(+). The enzyme catalyses (2R,3R)-2,3-dihydroxy-3-methylpentanoate + NADP(+) = (S)-2-ethyl-2-hydroxy-3-oxobutanoate + NADPH + H(+). Its pathway is amino-acid biosynthesis; L-isoleucine biosynthesis; L-isoleucine from 2-oxobutanoate: step 2/4. It participates in amino-acid biosynthesis; L-valine biosynthesis; L-valine from pyruvate: step 2/4. Its function is as follows. Involved in the biosynthesis of branched-chain amino acids (BCAA). Catalyzes an alkyl-migration followed by a ketol-acid reduction of (S)-2-acetolactate (S2AL) to yield (R)-2,3-dihydroxy-isovalerate. In the isomerase reaction, S2AL is rearranged via a Mg-dependent methyl migration to produce 3-hydroxy-3-methyl-2-ketobutyrate (HMKB). In the reductase reaction, this 2-ketoacid undergoes a metal-dependent reduction by NADPH to yield (R)-2,3-dihydroxy-isovalerate. The polypeptide is Ketol-acid reductoisomerase (NADP(+)) (Prochlorococcus marinus (strain MIT 9301)).